The sequence spans 62 residues: Photosystem II reaction center protein Z (62 aa).

2 helical membrane-spanning segments follow: residues 8–28 and 41–61; these read ALIALVLFSFVMVIGVPVAYA and YLGSAIWAILVVIVAILNFFV.

Belongs to the PsbZ family. In terms of assembly, PSII is composed of 1 copy each of membrane proteins PsbA, PsbB, PsbC, PsbD, PsbE, PsbF, PsbH, PsbI, PsbJ, PsbK, PsbL, PsbM, PsbT, PsbX, PsbY, PsbZ, Psb30/Ycf12, peripheral proteins PsbO, CyanoQ (PsbQ), PsbU, PsbV and a large number of cofactors. It forms dimeric complexes.

The protein resides in the cellular thylakoid membrane. Its function is as follows. May control the interaction of photosystem II (PSII) cores with the light-harvesting antenna, regulates electron flow through the 2 photosystem reaction centers. PSII is a light-driven water plastoquinone oxidoreductase, using light energy to abstract electrons from H(2)O, generating a proton gradient subsequently used for ATP formation. In Rippkaea orientalis (strain PCC 8801 / RF-1) (Cyanothece sp. (strain PCC 8801)), this protein is Photosystem II reaction center protein Z.